Consider the following 1055-residue polypeptide: TNF receptor-associated factor homolog 1a (1055 aa).

The segment at 1–56 (MSESTNEDSGAGRSSLEENSNGQRSQSEEAIAEWRSSEQVENGTPSTSPPYWDIDD) is disordered. Residues 37 to 46 (SEQVENGTPS) are compositionally biased toward polar residues. In terms of domain architecture, MATH spans 68 to 191 (FGKNTWTIEK…SGCLTIKAQV (124 aa)). Disordered stretches follow at residues 352–380 (PKKE…VERD), 431–590 (AESE…NGSY), 603–772 (FSNG…APII), and 820–845 (VGSS…SHPS). Basic and acidic residues predominate over residues 433 to 446 (SEQKGKRGASEKEK). A coiled-coil region spans residues 441-496 (ASEKEKKSKKKQAKQKKNKNKGKEMRKEDKVRTQTEEREIEKEECVRAIAESSAEK). A compositionally biased stretch (basic residues) spans 447–460 (KSKKKQAKQKKNKN). Basic and acidic residues predominate over residues 461–486 (KGKEMRKEDKVRTQTEEREIEKEECV). Over residues 502–513 (DVSDVSDSVDSS) the composition is skewed to low complexity. Positions 524 to 537 (RESSPVHWEMDASE) are enriched in basic and acidic residues. Residues 569-586 (MDDSSSTCSNDSIQSGVA) are compositionally biased toward polar residues. Positions 657-668 (QKPESPKERSPV) are enriched in basic and acidic residues. 2 stretches are compositionally biased toward polar residues: residues 723–740 (KSPS…QLQT) and 823–845 (SGFT…SHPS).

In terms of assembly, interacts with AHK3. Interacts with ATG6, SINAT1, SINAT2, SINAT5 and SINAT6.

The protein resides in the cytoplasm. Functionally, functions redundantly with TRAF1B in the regulation of plant immune response. Contributes to the turnover of the nucleotide-binding domain and leucine-rich repeat-containing (NB-LRR) immune receptors SNC1 and RPS2. May associate with an E3 ubiquitin-protein ligase complex, which modulates ubiquitination and subsequent degradation of NB-LRR immune sensors to maintain their homeostasis. Functions redundantly with TRAF1B in the regulation of autophagosome formation. Required for SINAT1- and SINAT2-mediated ubiquitination and destabilization of ATG6. Functions as a molecular adapter that helps to regulate autophagy by modulating ATG6 stability. The sequence is that of TNF receptor-associated factor homolog 1a from Arabidopsis thaliana (Mouse-ear cress).